A 670-amino-acid chain; its full sequence is Sodium/glucose cotransporter 2 (670 aa).

The Extracellular segment spans residues 1–20 (MEGHVEEGSELGEQKVLIDN). The helical transmembrane segment at 21–42 (PADILVIAAYFLLVIGVGLWSM) threads the bilayer. The Cytoplasmic portion of the chain corresponds to 43–61 (FRTNRGTVGGYFLAGRSMV). A helical transmembrane segment spans residues 62–83 (WWPVGASLFASNIGSGHFVGLA). 2 residues coordinate Na(+): Ala71 and Ile74. Residues 84-91 (GTGAASGL) are Extracellular-facing. Residues 92–112 (AVAGFEWNALFVVLLLGWLFV) traverse the membrane as a helical segment. The Cytoplasmic segment spans residues 113 to 134 (PVYLTAGVITMPQYLRKRFGGR). A helical transmembrane segment spans residues 135 to 164 (RIRLYLSVLSLFLYIFTKISVDMFSGAVFI). Residues 165–171 (QQALGWN) lie on the Extracellular side of the membrane. The next 2 membrane-spanning stretches (helical) occupy residues 172-193 (IYAS…GGLA) and 194-215 (ALMY…ILTG). At 216 to 273 (YAFHEVGGYSGLFDKYLGAVTSLTVSKDPAVGNISSTCYQPRPDSYHLLRDPVTGGLP) the chain is on the extracellular side. Residue Asn248 is glycosylated (N-linked (GlcNAc...) asparagine). Cystine bridges form between Cys253–Cys509, Cys343–Cys349, Cys353–Cys359, and Cys515–Cys520. A helical transmembrane segment spans residues 274–293 (WPALLLGLTIVSGWHWCSDQ). The Cytoplasmic segment spans residues 294–307 (VIVQRCLAGKNLTH). A helical membrane pass occupies residues 308–329 (IKAGCILCGYLKLMPMFLMVMP). Residues 330–373 (GMISRILYPDEVACVVPEVCKRVCGTEVGCSNIAYPRLVVKLMP) lie on the Extracellular side of the membrane. Residues 374–404 (NGLRGLMLAVMLAALMSSLASIFNSSSTLFT) traverse the membrane as a helical segment. Na(+) contacts are provided by Ala387, Ser390, and Ser391. At 405–422 (MDIYTRLRPRAGDRELLL) the chain is on the cytoplasmic side. The chain crosses the membrane as a helical span at residues 423 to 444 (VGRLWVVFIVAVSVAWLPVVQA). At 445-449 (AQGGQ) the chain is on the extracellular side. The chain crosses the membrane as a helical span at residues 450–475 (LFDYIQSVSSYLAPPVSAVFVLALFV). Residues 476-480 (PRVNE) lie on the Cytoplasmic side of the membrane. The chain crosses the membrane as a helical span at residues 481–503 (KGAFWGLIGGLLMGLARLIPEFF). Residues 504–521 (FGTGSCVRPSACPAIFCR) are Extracellular-facing. A helical transmembrane segment spans residues 522–545 (VHYLYFAIILFFCSGFLTLAISRC). The Cytoplasmic portion of the chain corresponds to 546 to 649 (TAPIPQKHLH…DISEDPSWAR (104 aa)). Residues 650–668 (VVNLNALLMMTVAVFLWGF) form a helical membrane-spanning segment. The Extracellular segment spans residues 669-670 (YA).

It belongs to the sodium:solute symporter (SSF) (TC 2.A.21) family. As to quaternary structure, forms a heterodimer (via TM13) with PDZK1IP1 (via N-terminal transmembrane helix); this interaction enhances SLC5A2 transporter activity. In terms of processing, glycosylated at a single site. As to expression, kidney, in proximal tubule S1 segments.

It is found in the apical cell membrane. The catalysed reaction is D-glucose(out) + Na(+)(out) = D-glucose(in) + Na(+)(in). Its activity is regulated as follows. Enhanced by the interaction with PDZK1IP1/MAP17. Functionally, electrogenic Na(+)-coupled sugar symporter that actively transports D-glucose at the plasma membrane, with a Na(+) to sugar coupling ratio of 1:1. Transporter activity is driven by a transmembrane Na(+) electrochemical gradient set by the Na(+)/K(+) pump. Unlike SLC5A1/SGLT1, requires the auxiliary protein PDZK1IP1/MAP17 for full transporter activity. Has a primary role in D-glucose reabsorption from glomerular filtrate across the brush border of the early proximal tubules of the kidney. The protein is Sodium/glucose cotransporter 2 (Slc5a2) of Rattus norvegicus (Rat).